A 353-amino-acid chain; its full sequence is Diacetylchitobiose uptake system permease protein NgcF (353 aa).

The segment at 1 to 24 (MKDTIPTAETASRRPEPAARGGRP) is disordered. Transmembrane regions (helical) follow at residues 36–56 (FFLA…LIPF), 100–120 (LLAA…AVAI), 141–161 (IISF…WAQM), 197–217 (VMFV…IAAI), 254–274 (AYIY…AMVP), and 303–323 (TAMG…VFLV). Residues 95–320 (LRNVALLAAF…AVTLVFAALV (226 aa)) enclose the ABC transmembrane type-1 domain. The disordered stretch occupies residues 329–353 (GGEGESKRKAPGSRARRAAAKGGAR). The span at 337 to 353 (KAPGSRARRAAAKGGAR) shows a compositional bias: basic residues.

This sequence belongs to the binding-protein-dependent transport system permease family. In terms of assembly, the complex is composed of two ATP-binding proteins (MsiK), two transmembrane proteins (NgcF and NgcG) and a solute-binding protein (NgcE).

The protein localises to the cell membrane. Functionally, part of the ABC transporter complex NgcEFG-MsiK involved in N,N'-diacetylchitobiose ((GlcNAc)2) uptake. Responsible for the translocation of the substrate across the membrane. This is Diacetylchitobiose uptake system permease protein NgcF from Streptomyces coelicolor (strain ATCC BAA-471 / A3(2) / M145).